A 693-amino-acid polypeptide reads, in one-letter code: MNQNFSSMIDQYKHQQLRIGSVSPKQIHAWANKILPNGEIVGEVTKPYTFHYKTNKPEKDGLFCERIFGPIKSGICACGNYRVIGGEKEEPKFCEQCGVESVDSRIRRYQMGYIKLACPVTHVWYLKRLPSYIANLSDKPLKELEGLVYCDFSFARPIAKKPTFLRLRGSFEYEIQSRKYSIPLFFTTQGFDTFRNREISTGATAIREQLADPDLRIIIDRSLVEWKELGEEGSTGNDWEDRKIGRRKDFLVRRMELAKHFLRTNVEPEWMVLCLLPVLPPELRPIIQIDGGKPMSSDINELYRRVIYRNNTLTDLLTTSRSTPGELVMCQEKLVQEAVDTLLDNGIRGQPMRDGHNKVYKSFSDVIEGKEGRFRETLLGKRVDYSGRSVIVVGPSLSLHRCGLPREIAIELFQTFVIRGLIRQNLASNIGLAKSKIREKEPIVWEILQEVMQGHPVLLNRAPTLHRLGIQAFQPILVEGRAICLHPLVCKGFNADFDGDQMAVHVPLSLEAQAEARLLMFSHTNLLSPAIGDPISVPTQDMLMGLYVLTMGNRRGICANRYNPCNSRNYQNERTDHNNYKYRKGKEPYFCSSYDALGAYRQKGIDLYSTLWLRWRLDQRVIASINREIPIEVQYESLGTYHEIYDHYRVVRSVKKGMLCIYIRTTVGHISFYREIEEAVQGFCRSYSYSYGT.

4 residues coordinate Zn(2+): C76, C78, C94, and C97. Residues D496, D498, and D500 each coordinate Mg(2+).

It belongs to the RNA polymerase beta' chain family. RpoC1 subfamily. As to quaternary structure, in plastids the minimal PEP RNA polymerase catalytic core is composed of four subunits: alpha, beta, beta', and beta''. When a (nuclear-encoded) sigma factor is associated with the core the holoenzyme is formed, which can initiate transcription. The cofactor is Mg(2+). Requires Zn(2+) as cofactor.

The protein resides in the plastid. It is found in the chloroplast. It catalyses the reaction RNA(n) + a ribonucleoside 5'-triphosphate = RNA(n+1) + diphosphate. Functionally, DNA-dependent RNA polymerase catalyzes the transcription of DNA into RNA using the four ribonucleoside triphosphates as substrates. The protein is DNA-directed RNA polymerase subunit beta' of Nuphar advena (Common spatterdock).